The chain runs to 544 residues: Flagellar hook-associated protein 1 (544 aa).

Belongs to the flagella basal body rod proteins family.

The protein localises to the secreted. It is found in the bacterial flagellum. In Buchnera aphidicola subsp. Schizaphis graminum (strain Sg), this protein is Flagellar hook-associated protein 1 (flgK).